The chain runs to 162 residues: MRISKPSLRSTSIQCYLCFLLNSHLITEAGIHVFVWGCISAGLPKTEASWHDVIYDLKRIENLIQSIHIDATLYTESDVHPNCKITAMKCFLLELRVILHESRNEDIHETITNLIILANSSLNSNGNVTESGCKECEELEEKSIAEFLQSFVHIVQMFINTS.

Positions 1-29 (MRISKPSLRSTSIQCYLCFLLNSHLITEA) are cleaved as a signal peptide. Positions 30–48 (GIHVFVWGCISAGLPKTEA) are excised as a propeptide. 2 disulfides stabilise this stretch: Cys-83-Cys-133 and Cys-90-Cys-136. N-linked (GlcNAc...) asparagine glycans are attached at residues Asn-119 and Asn-127.

This sequence belongs to the IL-15/IL-21 family.

The protein localises to the secreted. In terms of biological role, cytokine that plays a major role in the development of inflammatory and protective immune responses to microbial invaders and parasites by modulating immune cells of both the innate and adaptive immune systems. Stimulates the proliferation of natural killer cells, T-cells and B-cells and promotes the secretion of several cytokines. In monocytes, induces the production of IL8 and monocyte chemotactic protein 1/CCL2, two chemokines that attract neutrophils and monocytes respectively to sites of infection. Unlike most cytokines, which are secreted in soluble form, IL15 is expressed in association with its high affinity IL15RA on the surface of IL15-producing cells and delivers signals to target cells that express IL2RB and IL2RG receptor subunits. Binding to its receptor triggers the phosphorylation of JAK1 and JAK3 and the recruitment and subsequent phosphorylation of signal transducer and activator of transcription-3/STAT3 and STAT5. In mast cells, induces the rapid tyrosine phosphorylation of STAT6 and thereby controls mast cell survival and release of cytokines such as IL4. This Cavia porcellus (Guinea pig) protein is Interleukin-15 (IL15).